A 315-amino-acid chain; its full sequence is Eukaryotic translation initiation factor 2 subunit 1 (315 aa).

Positions D17 to R88 constitute an S1 motif domain. A phosphoserine mark is found at S49 and S52. A disordered region spans residues R292–D315. Residues E299–E308 are compositionally biased toward acidic residues.

This sequence belongs to the eIF-2-alpha family. Eukaryotic translation initiation factor 2 eIF2 is a heterotrimeric complex composed of an alpha, a beta and a gamma subunit. Phosphorylation at Ser-49 and Ser-52 stabilizes the eIF-2/GDP/eIF2B complex and prevents GDP/GTP exchange reaction, thus impairing the recycling of eIF-2 between successive rounds of initiation and leading to global inhibition of translation, while concomitantly initiating the preferential translation of integrated stress response (ISR)-specific mRNAs.

The protein resides in the cytoplasm. The protein localises to the stress granule. It is found in the cytosol. Its activity is regulated as follows. Activity is regulated by phosphorylation at Ser-49 and Ser-52, which stabilizes the eIF-2/GDP/eIF2B complex and prevents the eIF2B-mediated exchange of GDP for GTP, thereby preventing the formation of the 43S pre-initiation complex (PIC). This results in the global attenuation of 5' cap-dependent protein synthesis and concomitant translation of ISR-specific mRNAs that contain a short upstream open reading frame (uORF) in their 5' UTR. In terms of biological role, functions in the early steps of protein synthesis by forming a ternary complex with GTP and initiator tRNA. This complex binds to a 40S ribosomal subunit, followed by mRNA binding to form a 43S pre-initiation complex. Junction of the 60S ribosomal subunit to form the 80S initiation complex is preceded by hydrolysis of the GTP bound to eIF-2 and release of an eIF-2-GDP binary complex. In order for eIF-2 to recycle and catalyze another round of initiation, the GDP bound to eIF-2 must exchange with GTP by way of a reaction catalyzed by eIF2B. EIF2S1/eIF2-alpha is a key component of the integrated stress response (ISR), required for adaptation to various stress: phosphorylation by metabolic-stress sensing protein kinases in response to stress converts EIF2S1/eIF-2-alpha in a global protein synthesis inhibitor, leading to a attenuation of cap-dependent translation, while concomitantly initiating the preferential translation of ISR-specific mRNAs, such as the transcriptional activators ATF4 and QRICH1. This Xenopus tropicalis (Western clawed frog) protein is Eukaryotic translation initiation factor 2 subunit 1 (eif2s1).